A 469-amino-acid polypeptide reads, in one-letter code: Glutamate--tRNA ligase (469 aa).

The 'HIGH' region signature appears at 9–19 (PSPTGYLHVGG). Residues cysteine 98, cysteine 100, cysteine 125, and aspartate 127 each contribute to the Zn(2+) site. The 'KMSKS' region motif lies at 237–241 (KLSKR). Position 240 (lysine 240) interacts with ATP.

The protein belongs to the class-I aminoacyl-tRNA synthetase family. Glutamate--tRNA ligase type 1 subfamily. Monomer. Requires Zn(2+) as cofactor.

It localises to the cytoplasm. It carries out the reaction tRNA(Glu) + L-glutamate + ATP = L-glutamyl-tRNA(Glu) + AMP + diphosphate. Functionally, catalyzes the attachment of glutamate to tRNA(Glu) in a two-step reaction: glutamate is first activated by ATP to form Glu-AMP and then transferred to the acceptor end of tRNA(Glu). The chain is Glutamate--tRNA ligase from Erwinia tasmaniensis (strain DSM 17950 / CFBP 7177 / CIP 109463 / NCPPB 4357 / Et1/99).